A 233-amino-acid polypeptide reads, in one-letter code: Adapter protein MecA (233 aa).

Belongs to the MecA family. Homodimer.

In terms of biological role, enables the recognition and targeting of unfolded and aggregated proteins to the ClpC protease or to other proteins involved in proteolysis. The polypeptide is Adapter protein MecA (Lactococcus lactis subsp. lactis (strain IL1403) (Streptococcus lactis)).